The sequence spans 1253 residues: Structural polyprotein (1253 aa).

Residues Phe-37–Lys-71 are host transcription inhibition. The segment at Ala-58–Glu-109 is disordered. Positions Pro-64–Pro-105 match the Nuclear localization signal motif. Residues Pro-65–Lys-107 are compositionally biased toward basic residues. Residues Lys-87–Ile-120 form a binding to the viral RNA region. Residues Pro-105–Cys-119 form a ribosome-binding region. The cysteines at positions 119 and 134 are disulfide-linked. The 149-residue stretch at Cys-119–Trp-267 folds into the Peptidase S3 domain. His-145 functions as the Charge relay system in the catalytic mechanism. A Nuclear export signal motif is present at residues Ile-150–Phe-160. The interaction with spike glycoprotein E2 stretch occupies residues Lys-161–Tyr-166. The active-site Charge relay system is Asp-167. The tract at residues Pro-189–Ala-199 is dimerization of the capsid protein. Ser-219 serves as the catalytic Charge relay system. Positions Asp-225–Arg-229 are dimerization of the capsid protein. Residues Ser-268–Ser-701 are Extracellular-facing. 3 cysteine pairs are disulfide-bonded: Cys-276/Cys-285, Cys-290/Cys-294, and Cys-293/Cys-325. Asn-280 carries an N-linked (GlcNAc...) asparagine; by host glycan. A glycan (N-linked (GlcNAc...) asparagine; by host) is linked at Asn-327. 6 disulfides stabilise this stretch: Cys-352–Cys-458, Cys-355–Cys-361, Cys-424–Cys-438, Cys-486–Cys-598, Cys-534–Cys-558, and Cys-536–Cys-553. An N-linked (GlcNAc...) asparagine; by host glycan is attached at Asn-533. Asn-595 carries N-linked (GlcNAc...) asparagine; by host glycosylation. Residues Ala-702–Val-722 traverse the membrane as a helical segment. Cys-718 carries S-stearoyl cysteine; by host lipidation. The segment at Ala-723 to Lys-727 is interaction with the capsid protein. The Cytoplasmic segment spans residues Ala-723–Ala-755. A lipid anchor (S-stearoyl cysteine; by host) is attached at Cys-728. Residues Cys-728–Cys-748 form a transient transmembrane before p62-6K protein processing region. The cysteines at positions 728 and 749 are disulfide-linked. S-palmitoyl cysteine; by host attachment occurs at residues Cys-748 and Cys-749. Residues Ala-756–Gln-770 lie on the Extracellular side of the membrane. A helical membrane pass occupies residues Ala-771–Leu-791. Position 792 (Arg-792) is a topological domain, cytoplasmic. A helical transmembrane segment spans residues Asn-793 to Ala-813. Residues Arg-814–Gly-1230 are Extracellular-facing. Disulfide bonds link Cys-864/Cys-929, Cys-877/Cys-909, Cys-878/Cys-911, and Cys-883/Cys-893. Positions Val-899 to Thr-916 are E1 fusion peptide loop. 2 N-linked (GlcNAc...) asparagine; by host glycosylation sites follow: Asn-956 and Asn-1085. Cystine bridges form between Cys-1074–Cys-1086, Cys-1116–Cys-1191, Cys-1121–Cys-1195, and Cys-1143–Cys-1185. The interval Ile-1112–Ser-1192 is E1-DIII; interaction with host receptor VLDLR. Residues Gly-1231–Leu-1251 traverse the membrane as a helical segment. Residue Cys-1248 is the site of S-stearoyl cysteine; by host attachment. Residues Arg-1252 to Arg-1253 lie on the Cytoplasmic side of the membrane.

In terms of assembly, homodimer. Homomultimer. Interacts with host karyopherin KPNA4; this interaction allows the nuclear import of the viral capsid protein. Interacts with spike glycoprotein E2. Interacts with host IRAK1; the interaction leads to inhibition of IRAK1-dependent signaling. The precursor of protein E3/E2 and E1 form a heterodimer shortly after synthesis. As to quaternary structure, the precursor of protein E3/E2 and E1 form a heterodimer shortly after synthesis. Processing of the precursor of protein E3/E2 into E2 and E3 results in a heterodimer of the spike glycoproteins E2 and E1. Spike at virion surface are constituted of a trimer of E2-E1 heterodimers. E2-E1 heterodimers interact with host VLDLR or LRP8/APOER2 to mediate viral entry. After target cell attachment and endocytosis, E1 change conformation to form homotrimers. Interacts with 6K protein. Interacts (via E1-DIII) with host VLDLR (via class A repeats); this interaction mediates viral entry into host cell. In terms of assembly, interacts with spike glycoprotein E1. Processing of the precursor of protein E3/E2 into E2 and E3 results in a heterodimer of the spike glycoproteins E2 and E1. Spike at virion surface are constituted of a trimer of E2-E1 heterodimers. E2-E1 heterodimers interact with host VLDLR or LRP8/APOER2 to mediate viral entry. Interacts with 6K protein. Oligomer. Interacts with spike glycoprotein E1. Interacts with spike glycoprotein E2. Post-translationally, specific enzymatic cleavages in vivo yield mature proteins. Capsid protein is auto-cleaved during polyprotein translation, unmasking a signal peptide at the N-terminus of the precursor of E3/E2. The remaining polyprotein is then targeted to the host endoplasmic reticulum, where host signal peptidase cleaves it into pE2, 6K and E1 proteins. pE2 is further processed to mature E3 and E2 by host furin in trans-Golgi vesicle. Protein processing process takes about 30 minutes at physiologic temperatures. The folding of the p62/6K/E1 precursor requires the formation of intrachain disulfide bonds and has been shown to involve a transient covalent interaction between the nascent and newly synthesized heterodimer and the host-cell chaperones, P4HB/PDI and PDIA3/ERp57. The folding pathway also includes non covalent interaction with human CANX/calnexin and CALR/calreticulin. In terms of processing, palmitoylated via thioester bonds. These palmitoylations may induce disruption of the C-terminus transmembrane. This would result in the reorientation of E2 C-terminus from lumenal to cytoplasmic side. Envelope E1, E2 and E3 proteins are N-glycosylated. Post-translationally, stearoylated. In terms of processing, palmitoylated via thioester bonds with about four covalently bound fatty acids per molecule.

It is found in the virion. Its subcellular location is the host cytoplasm. The protein resides in the host cell membrane. The protein localises to the host nucleus. It localises to the virion membrane. It is found in the host Golgi apparatus. Its subcellular location is the host trans-Golgi network. The protein resides in the host endoplasmic reticulum. It carries out the reaction Autocatalytic release of the core protein from the N-terminus of the togavirus structural polyprotein by hydrolysis of a -Trp-|-Ser- bond.. Its function is as follows. Forms an icosahedral capsid with a T=4 symmetry composed of 240 copies of the capsid protein surrounded by a lipid membrane through which penetrate 80 spikes composed of trimers of E1-E2 heterodimers. The capsid protein binds to the viral RNA genome at a site adjacent to a ribosome binding site for viral genome translation following genome release. Possesses a protease activity that results in its autocatalytic cleavage from the nascent structural protein. Following its self-cleavage, the capsid protein transiently associates with ribosomes, and within several minutes the protein binds to viral RNA and rapidly assembles into icosahedric core particles. The resulting nucleocapsid eventually associates with the cytoplasmic domain of the spike glycoprotein E2 at the cell membrane, leading to budding and formation of mature virions. In case of infection, new virions attach to target cells and after clathrin-mediated endocytosis their membrane fuses with the host endosomal membrane. This leads to the release of the nucleocapsid into the cytoplasm, followed by an uncoating event necessary for the genomic RNA to become accessible. The uncoating might be triggered by the interaction of capsid proteins with ribosomes. Binding of ribosomes would release the genomic RNA since the same region is genomic RNA-binding and ribosome-binding. Specifically inhibits interleukin-1 receptor-associated kinase 1/IRAK1-dependent signaling during viral entry, representing a means by which the alphaviruses may evade innate immune detection and activation prior to viral gene expression. Functionally, provides the signal sequence for the translocation of the precursor of protein E3/E2 to the host endoplasmic reticulum. Furin-cleaved E3 remains associated with spike glycoprotein E1 and mediates pH protection of the latter during the transport via the secretory pathway. After virion release from the host cell, the assembly protein E3 is gradually released in the extracellular space. In terms of biological role, plays a role in viral attachment to target host cell, by binding to the cell receptors VLDLR or LRP8/APOER2. The host LDLR can act as a cell receptor for viral entry. Synthesized as a p62 precursor which is processed by furin at the cell membrane just before virion budding, giving rise to E2-E1 heterodimer. The p62-E1 heterodimer is stable, whereas E2-E1 is unstable and dissociate at low pH. p62 is processed at the last step, presumably to avoid E1 fusion activation before its final export to cell surface. E2 C-terminus contains a transitory transmembrane that would be disrupted by palmitoylation, resulting in reorientation of the C-terminal tail from lumenal to cytoplasmic side. This step is critical since E2 C-terminus is involved in budding by interacting with capsid proteins. This release of E2 C-terminus in cytoplasm occurs lately in protein export, and precludes premature assembly of particles at the endoplasmic reticulum membrane. Acts as a viroporin that participates in virus glycoprotein processing and transport to the plasma membrane, cell permeabilization and budding of viral particles. Disrupts the calcium homeostasis of the cell, probably at the endoplasmic reticulum level. This leads to cytoplasmic calcium elevation. Because of its lipophilic properties, the 6K protein is postulated to influence the selection of lipids that interact with the transmembrane domains of the glycoproteins, which, in turn, affects the deformability of the bilayer required for the extreme curvature that occurs as budding proceeds. Present in low amount in virions, about 3% compared to viral glycoproteins. Its function is as follows. Class II viral fusion protein. Fusion activity is inactive as long as E1 is bound to E2 in mature virion. After virus attachment to target cell via host VLDLR or LRP8/APOER2 and endocytosis, acidification of the endosome induces dissociation of E1/E2 heterodimer and concomitant trimerization of the E1 subunits. This E1 trimer is fusion active, and promotes release of viral nucleocapsid in cytoplasm after endosome and viral membrane fusion. Efficient fusion requires the presence of cholesterol and sphingolipid in the target membrane. Fusion is optimal at levels of about 1 molecule of cholesterol per 2 molecules of phospholipids, and is specific for sterols containing a 3-beta-hydroxyl group. This is Structural polyprotein from Aedes (Middle-African hedgehog).